The following is an 85-amino-acid chain: UPF0386 protein TM1040_0419 (85 aa).

Positions 62–85 (SKSSRPYQISEKGRRSVRAQLDNR) are disordered.

The protein belongs to the UPF0386 family.

The chain is UPF0386 protein TM1040_0419 from Ruegeria sp. (strain TM1040) (Silicibacter sp.).